Consider the following 400-residue polypeptide: MAP kinase-activated protein kinase 2 (400 aa).

The disordered stretch occupies residues 1–43 (MLSNSQGQSPPVPFPAPAPPPQPPTPALPHPPAQPPPPPPQQF). The residue at position 9 (S9) is a Phosphoserine. Positions 10 to 42 (PPVPFPAPAPPPQPPTPALPHPPAQPPPPPPQQ) are enriched in pro residues. T25 carries the phosphothreonine modification. The Protein kinase domain occupies 64 to 325 (KVTSQVLGLG…ITEFMNHPWI (262 aa)). ATP is bound by residues 70-78 (LGLGINGKV) and K93. 139-141 (ECL) serves as a coordination point for staurosporine. Catalysis depends on D186, which acts as the Proton acceptor. T222 carries the phosphothreonine; by MAPK14 modification. Position 272 is a phosphoserine; by MAPK14 (S272). Phosphoserine; by autocatalysis is present on S328. Residues 328–364 (STKVPQTPLHTSRVLKEDKERWEDVKEEMTSALATMR) are autoinhibitory helix. T334 is subject to Phosphothreonine; by MAPK14. K353 is covalently cross-linked (Glycyl lysine isopeptide (Lys-Gly) (interchain with G-Cter in SUMO)). The Nuclear export signal (NES) signature appears at 356 to 365 (MTSALATMRV). The p38 MAPK-binding site stretch occupies residues 366–390 (DYEQIKIKKIEDASNPLLLKRRKKA). Short sequence motifs (bipartite nuclear localization signal) lie at residues 371 to 374 (KIKK) and 385 to 389 (KRRKK).

It belongs to the protein kinase superfamily. CAMK Ser/Thr protein kinase family. Heterodimer with p38-alpha/MAPK14; this heterodimer forms a stable complex: molecules are positioned 'face to face' so that the ATP-binding sites of both kinases are at the heterodimer interface. Interacts with PHC2. Interacts with HSF1. In terms of processing, sumoylation inhibits the protein kinase activity. Phosphorylated and activated by MAP kinase p38-alpha/MAPK14 at Thr-222, Ser-272 and Thr-334. As to expression, expressed in all tissues examined.

It localises to the cytoplasm. It is found in the nucleus. The enzyme catalyses L-seryl-[protein] + ATP = O-phospho-L-seryl-[protein] + ADP + H(+). It carries out the reaction L-threonyl-[protein] + ATP = O-phospho-L-threonyl-[protein] + ADP + H(+). With respect to regulation, activated following phosphorylation by p38-alpha/MAPK14 following various stresses. Inhibited following sumoylation. Specifically inhibited by pyrrolopyridine inhibitors. In terms of biological role, stress-activated serine/threonine-protein kinase involved in cytokine production, endocytosis, reorganization of the cytoskeleton, cell migration, cell cycle control, chromatin remodeling, DNA damage response and transcriptional regulation. Following stress, it is phosphorylated and activated by MAP kinase p38-alpha/MAPK14, leading to phosphorylation of substrates. Phosphorylates serine in the peptide sequence, Hyd-X-R-X(2)-S, where Hyd is a large hydrophobic residue. Phosphorylates ALOX5, CDC25B, CDC25C, CEP131, ELAVL1, HNRNPA0, HSP27/HSPB1, KRT18, KRT20, LIMK1, LSP1, PABPC1, PARN, PDE4A, RCSD1, RPS6KA3, TAB3 and TTP/ZFP36. Phosphorylates HSF1; leading to the interaction with HSP90 proteins and inhibiting HSF1 homotrimerization, DNA-binding and transactivation activities. Mediates phosphorylation of HSP27/HSPB1 in response to stress, leading to the dissociation of HSP27/HSPB1 from large small heat-shock protein (sHsps) oligomers and impairment of their chaperone activities and ability to protect against oxidative stress effectively. Involved in inflammatory response by regulating tumor necrosis factor (TNF) and IL6 production post-transcriptionally: acts by phosphorylating AU-rich elements (AREs)-binding proteins ELAVL1, HNRNPA0, PABPC1 and TTP/ZFP36, leading to the regulation of the stability and translation of TNF and IL6 mRNAs. Phosphorylation of TTP/ZFP36, a major post-transcriptional regulator of TNF, promotes its binding to 14-3-3 proteins and reduces its ARE mRNA affinity, leading to inhibition of dependent degradation of ARE-containing transcripts. Phosphorylates CEP131 in response to cellular stress induced by ultraviolet irradiation which promotes binding of CEP131 to 14-3-3 proteins and inhibits formation of novel centriolar satellites. Also involved in late G2/M checkpoint following DNA damage through a process of post-transcriptional mRNA stabilization: following DNA damage, relocalizes from nucleus to cytoplasm and phosphorylates HNRNPA0 and PARN, leading to stabilization of GADD45A mRNA. Involved in toll-like receptor signaling pathway (TLR) in dendritic cells: required for acute TLR-induced macropinocytosis by phosphorylating and activating RPS6KA3. This Homo sapiens (Human) protein is MAP kinase-activated protein kinase 2 (MAPKAPK2).